The following is a 154-amino-acid chain: RxLR effector protein PITG_12737 (154 aa).

The signal sequence occupies residues Met-1 to Gly-16. Positions Arg-42–Arg-58 match the RxLR-dEER motif.

The protein belongs to the RxLR effector family.

Its subcellular location is the secreted. It localises to the host nucleus. The protein resides in the host cytoplasm. Effector that enhances P.infestans colonization of Nicotiana benthamiana leaves. This is RxLR effector protein PITG_12737 from Phytophthora infestans (strain T30-4) (Potato late blight agent).